The sequence spans 238 residues: Ribonuclease HII (238 aa).

The region spanning 23–215 (QRLCGVDEAG…VREALARLPM (193 aa)) is the RNase H type-2 domain. Residues Asp29, Glu30, and Asp124 each coordinate a divalent metal cation.

The protein belongs to the RNase HII family. Mn(2+) serves as cofactor. The cofactor is Mg(2+).

The protein resides in the cytoplasm. The catalysed reaction is Endonucleolytic cleavage to 5'-phosphomonoester.. Functionally, endonuclease that specifically degrades the RNA of RNA-DNA hybrids. The protein is Ribonuclease HII of Cupriavidus necator (strain ATCC 17699 / DSM 428 / KCTC 22496 / NCIMB 10442 / H16 / Stanier 337) (Ralstonia eutropha).